A 162-amino-acid polypeptide reads, in one-letter code: NADH-quinone oxidoreductase subunit C (162 aa).

This sequence belongs to the complex I 30 kDa subunit family. In terms of assembly, NDH-1 is composed of 14 different subunits. Subunits NuoB, C, D, E, F, and G constitute the peripheral sector of the complex.

The protein localises to the cell inner membrane. The enzyme catalyses a quinone + NADH + 5 H(+)(in) = a quinol + NAD(+) + 4 H(+)(out). Its function is as follows. NDH-1 shuttles electrons from NADH, via FMN and iron-sulfur (Fe-S) centers, to quinones in the respiratory chain. The immediate electron acceptor for the enzyme in this species is believed to be ubiquinone. Couples the redox reaction to proton translocation (for every two electrons transferred, four hydrogen ions are translocated across the cytoplasmic membrane), and thus conserves the redox energy in a proton gradient. In Trichlorobacter lovleyi (strain ATCC BAA-1151 / DSM 17278 / SZ) (Geobacter lovleyi), this protein is NADH-quinone oxidoreductase subunit C.